A 52-amino-acid chain; its full sequence is uncharacterized protein (52 aa).

The segment at 1-52 is disordered; sequence MVNNDAKIGRREFYDRVESVRPKSPPRERPTYTYSNSRTVDGYSNRGPRADF. Residues 7–30 show a composition bias toward basic and acidic residues; the sequence is KIGRREFYDRVESVRPKSPPRERP.

This is an uncharacterized protein from Dictyostelium discoideum (Social amoeba).